A 279-amino-acid chain; its full sequence is MAFQGTSRTLTQQSSAATSDDLQKILFSPEAIKKMATECDLGRHHWMRADNAISVRPLVPEVTHGRIASFFKSGYDVGELCSKGYMSVPQVLCAVTRTVSTDAEGSLRIYLADLGDKELSPIDGQCVSLHNHDLPALVSFQPTYDCPMETVGNRKRCFAVVIERHGYIGYTGTTASVCSNWQARFSSKNNNYTHIAAGKTLVLPFNRLAEQTKPSAVARLLKSQLNNIESSQYVLTNAKINQNARSESEELNVESPPAAIGSSSASRSEAFRPQVVNGL.

The segment at 246 to 279 (SESEELNVESPPAAIGSSSASRSEAFRPQVVNGL) is disordered. Residues 254-268 (ESPPAAIGSSSASRS) show a composition bias toward low complexity.

The protein belongs to the cucumovirus movement protein family.

Its subcellular location is the host cell junction. The protein localises to the host plasmodesma. Its function is as follows. Transports viral genome to neighboring plant cells directly through plasmosdesmata, without any budding. The movement protein allows efficient cell to cell propagation, by bypassing the host cell wall barrier. Acts by forming a tubular structure at the host plasmodesmata, enlarging it enough to allow free passage of virion capsids. This is Movement protein from Cucumber mosaic virus (strain N) (CMV).